The chain runs to 114 residues: Large ribosomal subunit protein uL18 (114 aa).

This sequence belongs to the universal ribosomal protein uL18 family. In terms of assembly, part of the 50S ribosomal subunit; part of the 5S rRNA/L5/L18/L25 subcomplex. Contacts the 5S and 23S rRNAs.

Functionally, this is one of the proteins that bind and probably mediate the attachment of the 5S RNA into the large ribosomal subunit, where it forms part of the central protuberance. This Porphyromonas gingivalis (strain ATCC 33277 / DSM 20709 / CIP 103683 / JCM 12257 / NCTC 11834 / 2561) protein is Large ribosomal subunit protein uL18.